The sequence spans 1245 residues: TAL effector protein Brg11 (1245 aa).

2 disordered regions span residues 1 to 87 (MRIG…LVPE) and 173 to 205 (CPQA…PTFL). Positions 67–87 (PRRPLPVAPASAPPAPSLVPE) are enriched in pro residues. A Nuclear localization signal 1 motif is present at residues 185 to 191 (RSARARR). The Cryptic repeat -1 repeat unit spans residues 286-320 (LTRAHIVDIARQRSGDLALQALLPVATALTAAPLR). The stretch at 321–354 (LSASQIATVAQYGERPAIQALYRLRRKLTRAPLH) is one Cryptic repeat 0 repeat. Core repeat repeat units lie at residues 355–389 (LTPQ…APYR), 390–424 (LSTE…APYV), 425–459 (LDTE…APYA), 460–494 (LSTE…APYA), 495–529 (LSTE…VPYA), 530–564 (LSTE…APYA), 565–599 (LSTA…APYG), 600–634 (LSTE…APYA), 635–669 (LSTE…APYA), 670–704 (LSTA…APYA), 705–739 (LSTE…APYA), 740–774 (LNTE…APYA), 775–809 (LSTA…APYA), 810–844 (LSTE…APYG), 845–879 (LSTA…TPYD), and 880–914 (LNTA…APYA). The stretch at 915-948 (LSTAQVVAIACISGQQALEAIEAHMPTLRQASHS) is one Cryptic repeat +1 repeat. One copy of the Cryptic repeat +2 repeat lies at 949-982 (LSPERVAAIACIGGRSAVEAVRQGLPVKAIRRIR). 3 short sequence motifs (nuclear localization signal) span residues 980 to 983 (RIRR), 1108 to 1111 (HRKR), and 1145 to 1148 (RRKR). Positions 1096–1138 (SPGMAGQSACSPHRKRPAETAIAPRSIRRSPNNAGQPSEPWPD) are disordered. Residues 1237 to 1245 (DWLLQILET) are activation domain.

The protein belongs to the transcription activator-like effector (TALE) family. RipTAL/RTL subfamily.

The protein resides in the secreted. Its subcellular location is the host nucleus. Functionally, exported into plant cells, where it is targeted to the nucleus and probably acts as a transcription factor. Binds DNA in a sequence-specific manner. May contribute to plant pathogenicity. The sequence is that of TAL effector protein Brg11 from Ralstonia nicotianae (strain ATCC BAA-1114 / GMI1000) (Ralstonia solanacearum).